Here is a 574-residue protein sequence, read N- to C-terminus: Ribonuclease Y (574 aa).

Residues 1–21 (MSLLDLVLLLLVLGLGGVLLL) traverse the membrane as a helical segment. Residues 264–327 (AVTVVPIPSD…EIARMALEEL (64 aa)) form the KH domain. An HD domain is found at 390-483 (VLKHSIQVAH…VAAADALSAA (94 aa)).

This sequence belongs to the RNase Y family.

The protein localises to the cell membrane. In terms of biological role, endoribonuclease that initiates mRNA decay. The protein is Ribonuclease Y of Thermus thermophilus (strain ATCC 27634 / DSM 579 / HB8).